Reading from the N-terminus, the 369-residue chain is Probable dual-specificity RNA methyltransferase RlmN (369 aa).

E108 acts as the Proton acceptor in catalysis. The region spanning Y114–R351 is the Radical SAM core domain. C121 and C362 are joined by a disulfide. [4Fe-4S] cluster-binding residues include C128, C132, and C135. Residues G183–E184, S217, S240–H242, and N319 each bind S-adenosyl-L-methionine. C362 acts as the S-methylcysteine intermediate in catalysis.

It belongs to the radical SAM superfamily. RlmN family. [4Fe-4S] cluster serves as cofactor.

The protein localises to the cytoplasm. The enzyme catalyses adenosine(2503) in 23S rRNA + 2 reduced [2Fe-2S]-[ferredoxin] + 2 S-adenosyl-L-methionine = 2-methyladenosine(2503) in 23S rRNA + 5'-deoxyadenosine + L-methionine + 2 oxidized [2Fe-2S]-[ferredoxin] + S-adenosyl-L-homocysteine. It catalyses the reaction adenosine(37) in tRNA + 2 reduced [2Fe-2S]-[ferredoxin] + 2 S-adenosyl-L-methionine = 2-methyladenosine(37) in tRNA + 5'-deoxyadenosine + L-methionine + 2 oxidized [2Fe-2S]-[ferredoxin] + S-adenosyl-L-homocysteine. Specifically methylates position 2 of adenine 2503 in 23S rRNA and position 2 of adenine 37 in tRNAs. The protein is Probable dual-specificity RNA methyltransferase RlmN of Rhodococcus erythropolis (strain PR4 / NBRC 100887).